The sequence spans 167 residues: Small ribosomal subunit protein uS5 (167 aa).

In terms of domain architecture, S5 DRBM spans 11–74; the sequence is LQEKLIAVNR…EKARRNMINV (64 aa).

Belongs to the universal ribosomal protein uS5 family. In terms of assembly, part of the 30S ribosomal subunit. Contacts proteins S4 and S8.

Functionally, with S4 and S12 plays an important role in translational accuracy. Its function is as follows. Located at the back of the 30S subunit body where it stabilizes the conformation of the head with respect to the body. The sequence is that of Small ribosomal subunit protein uS5 from Klebsiella pneumoniae subsp. pneumoniae (strain ATCC 700721 / MGH 78578).